The primary structure comprises 343 residues: 3-dehydroquinate synthase (343 aa).

NAD(+) contacts are provided by residues 61 to 66 (SGEKYK), 95 to 99 (GVISD), 119 to 120 (TT), Lys132, Lys141, and 159 to 162 (FLKT). Zn(2+) is bound by residues Glu174, His231, and His248.

It belongs to the sugar phosphate cyclases superfamily. Dehydroquinate synthase family. Co(2+) is required as a cofactor. Requires Zn(2+) as cofactor. NAD(+) serves as cofactor.

The protein localises to the cytoplasm. The catalysed reaction is 7-phospho-2-dehydro-3-deoxy-D-arabino-heptonate = 3-dehydroquinate + phosphate. Its pathway is metabolic intermediate biosynthesis; chorismate biosynthesis; chorismate from D-erythrose 4-phosphate and phosphoenolpyruvate: step 2/7. Functionally, catalyzes the conversion of 3-deoxy-D-arabino-heptulosonate 7-phosphate (DAHP) to dehydroquinate (DHQ). This Helicobacter pylori (strain P12) protein is 3-dehydroquinate synthase.